Consider the following 228-residue polypeptide: Cytochrome c oxidase subunit 2 (228 aa).

Residues 1–26 lie on the Mitochondrial intermembrane side of the membrane; that stretch reads MATWNNLNLQNGASPLMEQIIFFHDH. A helical membrane pass occupies residues 27 to 48; it reads TLIILIMITILVGYLMINLFFN. Topologically, residues 49-62 are mitochondrial matrix; it reads KYINRFLLEGQMIE. The helical transmembrane segment at 63-82 threads the bilayer; sequence LIWTILPAITLIFIALPSLR. Residues 83-228 lie on the Mitochondrial intermembrane side of the membrane; the sequence is LLYLLDELNN…FIKWINNYSS (146 aa). Cu cation is bound by residues H161, C196, E198, C200, H204, and M207. E198 lines the Mg(2+) pocket.

Belongs to the cytochrome c oxidase subunit 2 family. Component of the cytochrome c oxidase (complex IV, CIV), a multisubunit enzyme composed of a catalytic core of 3 subunits and several supernumerary subunits. The complex exists as a monomer or a dimer and forms supercomplexes (SCs) in the inner mitochondrial membrane with ubiquinol-cytochrome c oxidoreductase (cytochrome b-c1 complex, complex III, CIII). Cu cation serves as cofactor.

The protein resides in the mitochondrion inner membrane. It carries out the reaction 4 Fe(II)-[cytochrome c] + O2 + 8 H(+)(in) = 4 Fe(III)-[cytochrome c] + 2 H2O + 4 H(+)(out). Component of the cytochrome c oxidase, the last enzyme in the mitochondrial electron transport chain which drives oxidative phosphorylation. The respiratory chain contains 3 multisubunit complexes succinate dehydrogenase (complex II, CII), ubiquinol-cytochrome c oxidoreductase (cytochrome b-c1 complex, complex III, CIII) and cytochrome c oxidase (complex IV, CIV), that cooperate to transfer electrons derived from NADH and succinate to molecular oxygen, creating an electrochemical gradient over the inner membrane that drives transmembrane transport and the ATP synthase. Cytochrome c oxidase is the component of the respiratory chain that catalyzes the reduction of oxygen to water. Electrons originating from reduced cytochrome c in the intermembrane space (IMS) are transferred via the dinuclear copper A center (CU(A)) of subunit 2 and heme A of subunit 1 to the active site in subunit 1, a binuclear center (BNC) formed by heme A3 and copper B (CU(B)). The BNC reduces molecular oxygen to 2 water molecules using 4 electrons from cytochrome c in the IMS and 4 protons from the mitochondrial matrix. This chain is Cytochrome c oxidase subunit 2 (COII), found in Yponomeuta malinellus (European small ermine moth).